The sequence spans 184 residues: Glutathione-regulated potassium-efflux system ancillary protein KefG (184 aa).

Belongs to the NAD(P)H dehydrogenase (quinone) family. KefG subfamily. In terms of assembly, interacts with KefB.

It is found in the cell inner membrane. It carries out the reaction a quinone + NADH + H(+) = a quinol + NAD(+). It catalyses the reaction a quinone + NADPH + H(+) = a quinol + NADP(+). Its function is as follows. Regulatory subunit of a potassium efflux system that confers protection against electrophiles. Required for full activity of KefB. This Cronobacter sakazakii (strain ATCC BAA-894) (Enterobacter sakazakii) protein is Glutathione-regulated potassium-efflux system ancillary protein KefG.